The primary structure comprises 146 residues: Small ribosomal subunit protein uS9 (146 aa).

The protein belongs to the universal ribosomal protein uS9 family. As to quaternary structure, component of the small ribosomal subunit.

Its subcellular location is the cytoplasm. Functionally, component of the small ribosomal subunit. The ribosome is a large ribonucleoprotein complex responsible for the synthesis of proteins in the cell. This Ictalurus punctatus (Channel catfish) protein is Small ribosomal subunit protein uS9 (rps16).